A 124-amino-acid polypeptide reads, in one-letter code: MSQQPYYETMYILRPDIPEEEVETHVTKYREMVTEAGAEVLDNQMRGKRRLAYPISNHKEGIYVQLSHNGNGQQVAVLEKAMRLSEDVIRYLTVKQEGPLPAPRIVPGSEPEPVQQQEAAAVEA.

Positions 99 to 124 (PLPAPRIVPGSEPEPVQQQEAAAVEA) are disordered. Positions 111–124 (PEPVQQQEAAAVEA) are enriched in low complexity.

This sequence belongs to the bacterial ribosomal protein bS6 family.

Its function is as follows. Binds together with bS18 to 16S ribosomal RNA. This chain is Small ribosomal subunit protein bS6, found in Prochlorococcus marinus (strain MIT 9313).